The chain runs to 143 residues: Large ribosomal subunit protein uL11 (143 aa).

The protein belongs to the universal ribosomal protein uL11 family. As to quaternary structure, part of the ribosomal stalk of the 50S ribosomal subunit. Interacts with L10 and the large rRNA to form the base of the stalk. L10 forms an elongated spine to which L12 dimers bind in a sequential fashion forming a multimeric L10(L12)X complex. In terms of processing, one or more lysine residues are methylated.

In terms of biological role, forms part of the ribosomal stalk which helps the ribosome interact with GTP-bound translation factors. In Caulobacter vibrioides (strain ATCC 19089 / CIP 103742 / CB 15) (Caulobacter crescentus), this protein is Large ribosomal subunit protein uL11.